Reading from the N-terminus, the 62-residue chain is Potassium channel toxin alpha-KTx 22.1 (62 aa).

A signal peptide spans 1 to 18; that stretch reads MQKLFIVFVLFCILRLDA. 3 disulfides stabilise this stretch: cysteine 28-cysteine 46, cysteine 33-cysteine 59, and cysteine 37-cysteine 61.

This sequence belongs to the short scorpion toxin superfamily. Potassium channel inhibitor family. Alpha-KTx 22 subfamily. As to expression, expressed by the venom gland.

It is found in the secreted. In terms of biological role, may block potassium channels. The sequence is that of Potassium channel toxin alpha-KTx 22.1 from Olivierus martensii (Manchurian scorpion).